The following is a 225-amino-acid chain: Small ribosomal subunit protein uS7 (225 aa).

This sequence belongs to the universal ribosomal protein uS7 family. As to quaternary structure, component of the small ribosomal subunit. Mature ribosomes consist of a small (40S) and a large (60S) subunit. The 40S subunit contains about 32 different proteins and 1 molecule of RNA (18S). The 60S subunit contains 45 different proteins and 3 molecules of RNA (25S, 5.8S and 5S).

The protein localises to the cytoplasm. Functionally, component of the ribosome, a large ribonucleoprotein complex responsible for the synthesis of proteins in the cell. The small ribosomal subunit (SSU) binds messenger RNAs (mRNAs) and translates the encoded message by selecting cognate aminoacyl-transfer RNA (tRNA) molecules. The large subunit (LSU) contains the ribosomal catalytic site termed the peptidyl transferase center (PTC), which catalyzes the formation of peptide bonds, thereby polymerizing the amino acids delivered by tRNAs into a polypeptide chain. The nascent polypeptides leave the ribosome through a tunnel in the LSU and interact with protein factors that function in enzymatic processing, targeting, and the membrane insertion of nascent chains at the exit of the ribosomal tunnel. The chain is Small ribosomal subunit protein uS7 (RPS5) from Candida albicans (strain SC5314 / ATCC MYA-2876) (Yeast).